The following is a 232-amino-acid chain: Ribose-5-phosphate isomerase A (232 aa).

Residues 31-34 (TGST), 87-90 (DGAD), and 100-103 (KGGG) contribute to the substrate site. Residue E109 is the Proton acceptor of the active site. K127 is a substrate binding site.

Belongs to the ribose 5-phosphate isomerase family. Homodimer.

The enzyme catalyses aldehydo-D-ribose 5-phosphate = D-ribulose 5-phosphate. The protein operates within carbohydrate degradation; pentose phosphate pathway; D-ribose 5-phosphate from D-ribulose 5-phosphate (non-oxidative stage): step 1/1. Functionally, catalyzes the reversible conversion of ribose-5-phosphate to ribulose 5-phosphate. This chain is Ribose-5-phosphate isomerase A, found in Bifidobacterium longum (strain NCC 2705).